The chain runs to 214 residues: Soluble inorganic pyrophosphatase (214 aa).

Substrate contacts are provided by K64, R78, and Y90. Mg(2+)-binding residues include D100, D105, and D137. Y174 contributes to the substrate binding site.

It belongs to the PPase family. Requires Mg(2+) as cofactor.

Its subcellular location is the cytoplasm. The enzyme catalyses diphosphate + H2O = 2 phosphate + H(+). The polypeptide is Soluble inorganic pyrophosphatase (IPP) (Oryza sativa subsp. indica (Rice)).